The following is a 97-amino-acid chain: Small ribosomal subunit protein bS16c (97 aa).

It belongs to the bacterial ribosomal protein bS16 family.

It is found in the plastid. Its subcellular location is the chloroplast. This chain is Small ribosomal subunit protein bS16c, found in Piper cenocladum (Ant piper).